Consider the following 140-residue polypeptide: Large ribosomal subunit protein uL14 (140 aa).

The protein belongs to the universal ribosomal protein uL14 family.

The protein is Large ribosomal subunit protein uL14 (RpL23) of Drosophila melanogaster (Fruit fly).